Reading from the N-terminus, the 137-residue chain is Ribosome-binding factor A (137 aa).

This sequence belongs to the RbfA family. As to quaternary structure, monomer. Binds 30S ribosomal subunits, but not 50S ribosomal subunits or 70S ribosomes.

The protein localises to the cytoplasm. In terms of biological role, one of several proteins that assist in the late maturation steps of the functional core of the 30S ribosomal subunit. Associates with free 30S ribosomal subunits (but not with 30S subunits that are part of 70S ribosomes or polysomes). Required for efficient processing of 16S rRNA. May interact with the 5'-terminal helix region of 16S rRNA. The polypeptide is Ribosome-binding factor A (Cereibacter sphaeroides (strain KD131 / KCTC 12085) (Rhodobacter sphaeroides)).